The sequence spans 680 residues: Trehalase (680 aa).

The disordered stretch occupies residues 1–27 (MVLHAQPPDQSTETAREAKALAGATDG).

Belongs to the glycosyl hydrolase 15 family. In terms of assembly, homomultimer. Phosphate is required as a cofactor.

The catalysed reaction is alpha,alpha-trehalose + H2O = alpha-D-glucose + beta-D-glucose. Its pathway is glycan degradation; trehalose degradation; D-glucose from alpha,alpha-trehalose: step 1/1. Its function is as follows. Catalyzes the hydrolysis of alpha,alpha-trehalose into two molecules of D-glucose. This chain is Trehalase, found in Mycobacterium tuberculosis (strain ATCC 25618 / H37Rv).